Reading from the N-terminus, the 82-residue chain is Sec-independent protein translocase protein TatA (82 aa).

Residues 1–21 (MHPPSITQLLIILLIIVLLFG) traverse the membrane as a helical segment. Positions 42-82 (AVKEDEEDNQSEENTKSQIKQSESKNENVSKTHTDSQKQDT) are disordered. Residues 63-82 (SESKNENVSKTHTDSQKQDT) show a composition bias toward basic and acidic residues.

The protein belongs to the TatA/E family. As to quaternary structure, the Tat system comprises two distinct complexes: a TatABC complex, containing multiple copies of TatA, TatB and TatC subunits, and a separate TatA complex, containing only TatA subunits. Substrates initially bind to the TatABC complex, which probably triggers association of the separate TatA complex to form the active translocon.

It localises to the cell inner membrane. Functionally, part of the twin-arginine translocation (Tat) system that transports large folded proteins containing a characteristic twin-arginine motif in their signal peptide across membranes. TatA could form the protein-conducting channel of the Tat system. The polypeptide is Sec-independent protein translocase protein TatA (Helicobacter hepaticus (strain ATCC 51449 / 3B1)).